The sequence spans 168 residues: Transcriptional repressor NrdR (168 aa).

The disordered stretch occupies residues 1-21 (MQCPACRHTDSRVLESRSSES). A zinc finger lies at 3–34 (CPACRHTDSRVLESRSSESGRSVRRRRECLSC). Over residues 7-20 (RHTDSRVLESRSSE) the composition is skewed to basic and acidic residues. The ATP-cone domain occupies 49-139 (ISVIKRNGDR…VYRQFRGVRD (91 aa)).

It belongs to the NrdR family. Zn(2+) serves as cofactor.

In terms of biological role, negatively regulates transcription of bacterial ribonucleotide reductase nrd genes and operons by binding to NrdR-boxes. In Synechococcus elongatus (strain ATCC 33912 / PCC 7942 / FACHB-805) (Anacystis nidulans R2), this protein is Transcriptional repressor NrdR.